Reading from the N-terminus, the 344-residue chain is tRNA N6-adenosine threonylcarbamoyltransferase (344 aa).

Histidine 110 and histidine 114 together coordinate Fe cation. Substrate is bound by residues 133–137 (AVSGA), aspartate 166, glycine 179, and asparagine 278. Aspartate 303 is a binding site for Fe cation.

This sequence belongs to the KAE1 / TsaD family. Fe(2+) serves as cofactor.

It is found in the cytoplasm. It carries out the reaction L-threonylcarbamoyladenylate + adenosine(37) in tRNA = N(6)-L-threonylcarbamoyladenosine(37) in tRNA + AMP + H(+). In terms of biological role, required for the formation of a threonylcarbamoyl group on adenosine at position 37 (t(6)A37) in tRNAs that read codons beginning with adenine. Is involved in the transfer of the threonylcarbamoyl moiety of threonylcarbamoyl-AMP (TC-AMP) to the N6 group of A37, together with TsaE and TsaB. TsaD likely plays a direct catalytic role in this reaction. This chain is tRNA N6-adenosine threonylcarbamoyltransferase, found in Chlamydia caviae (strain ATCC VR-813 / DSM 19441 / 03DC25 / GPIC) (Chlamydophila caviae).